The primary structure comprises 244 residues: Probable 2-phosphosulfolactate phosphatase (244 aa).

It belongs to the ComB family. Requires Mg(2+) as cofactor.

It catalyses the reaction (2R)-O-phospho-3-sulfolactate + H2O = (2R)-3-sulfolactate + phosphate. The protein is Probable 2-phosphosulfolactate phosphatase of Thermosynechococcus vestitus (strain NIES-2133 / IAM M-273 / BP-1).